We begin with the raw amino-acid sequence, 337 residues long: 4-hydroxyproline 2-epimerase 2 (337 aa).

C90 (proton acceptor) is an active-site residue. Substrate contacts are provided by residues G91–H92, H223, and D249. The active-site Proton donor is C253. G254–T255 is a substrate binding site.

It belongs to the proline racemase family.

It carries out the reaction trans-4-hydroxy-L-proline = cis-4-hydroxy-D-proline. In terms of biological role, catalyzes the epimerization of trans-4-hydroxy-L-proline (t4LHyp) to cis-4-hydroxy-D-proline (c4DHyp). Is likely involved in a degradation pathway that converts t4LHyp to alpha-ketoglutarate. Can also catalyze the epimerization of trans-3-hydroxy-L-proline (t3LHyp) to cis-3-hydroxy-D-proline (c3DHyp), albeit with 170-fold lower efficiency. Displays no proline racemase activity. This is 4-hydroxyproline 2-epimerase 2 from Brucella anthropi (strain ATCC 49188 / DSM 6882 / CCUG 24695 / JCM 21032 / LMG 3331 / NBRC 15819 / NCTC 12168 / Alc 37) (Ochrobactrum anthropi).